Here is a 366-residue protein sequence, read N- to C-terminus: MITLQRTPLFDVYAKYGGKTIDFGGWELPVQFSSIKEEHEAVRTAAGLFDVSHMGEVEVKGVDSLAFLQRVVTNDVSTLKVGGAQYTAMCYENGGTVDDLLIYKRGEEDYLLVINASNIEKDYEWLASHVIGDATVVNVSSEVAQLAIQGPKAEGILQKVVSEDLKEIKFFKFKNDILVDGIPALVSRTGYTGEDGFEIYCKSEDAAKLWEKLLEVGAEEGLKACGLGARDTLRFEATLPLYGQELSKDITPIEAGIGFAVKPNKEADFFGKATLKEQKENGAPRKLVGIEVIERGIPRTHYPVFIGEEKIGEVTSGTQSPTLKKSIGLALIDVKYAAVDTEVEIEIRNKRVKAVVVPTPFYKRSK.

It belongs to the GcvT family. In terms of assembly, the glycine cleavage system is composed of four proteins: P, T, L and H.

It catalyses the reaction N(6)-[(R)-S(8)-aminomethyldihydrolipoyl]-L-lysyl-[protein] + (6S)-5,6,7,8-tetrahydrofolate = N(6)-[(R)-dihydrolipoyl]-L-lysyl-[protein] + (6R)-5,10-methylene-5,6,7,8-tetrahydrofolate + NH4(+). Its function is as follows. The glycine cleavage system catalyzes the degradation of glycine. The chain is Aminomethyltransferase from Bacillus cereus (strain 03BB102).